The chain runs to 289 residues: MPVYVDREAPKLWRRIYSEATLEASLLAEKWKLVLAGLVFQYIHGLAAHGVHYLHRPGPTLQDAGFFILPALGQDKAFFSETVFVTIFGSFILWTFHPFVSHSKKICTVLIWCRVFVYLAASQSLRIITFFATQLPGPNYHCREGSKLAKIPPPKNVLEVLLINFPDGVIYGCGDLIFSSHTIFTLVFVRTYQRYGTRRWIKHLAWLMAVIQSILIIASRKHYTVDIVVAWYTVNLVMFYVDSKLPEMAERSSGPSPTPLLPLSTKDSKNKSKEDHQRLLNENNVADDH.

5 helical membrane-spanning segments follow: residues 33–53 (LVLA…GVHY), 77–97 (AFFS…WTFH), 115–135 (VFVY…ATQL), 169–189 (VIYG…LVFV), and 199–219 (RWIK…IIAS). The active site involves H181. Active-site residues include H222 and D226. Residues 223 to 243 (YTVDIVVAWYTVNLVMFYVDS) traverse the membrane as a helical segment. The tract at residues 249–289 (AERSSGPSPTPLLPLSTKDSKNKSKEDHQRLLNENNVADDH) is disordered. Over residues 266 to 279 (KDSKNKSKEDHQRL) the composition is skewed to basic and acidic residues. The segment covering 280–289 (LNENNVADDH) has biased composition (polar residues).

Belongs to the sphingomyelin synthase family. As to expression, mostly expressed in stems and flowers, and, to a lower extent, in leaves, roots and siliques.

It is found in the membrane. Its function is as follows. Catalyzes the transfer of the phosphorylinositol group from phosphatidylinositol (PI) to phytoceramide, an essential step in sphingolipid biosynthesis. The protein is Phosphatidylinositol:ceramide inositolphosphotransferase 3 (IPCS3) of Arabidopsis thaliana (Mouse-ear cress).